The following is a 255-amino-acid chain: Hydroxyacylglutathione hydrolase (255 aa).

His56, His58, Asp60, His61, His114, Asp133, and His171 together coordinate Zn(2+).

It belongs to the metallo-beta-lactamase superfamily. Glyoxalase II family. As to quaternary structure, monomer. The cofactor is Zn(2+).

It carries out the reaction an S-(2-hydroxyacyl)glutathione + H2O = a 2-hydroxy carboxylate + glutathione + H(+). It functions in the pathway secondary metabolite metabolism; methylglyoxal degradation; (R)-lactate from methylglyoxal: step 2/2. In terms of biological role, thiolesterase that catalyzes the hydrolysis of S-D-lactoyl-glutathione to form glutathione and D-lactic acid. The polypeptide is Hydroxyacylglutathione hydrolase (Nitrobacter winogradskyi (strain ATCC 25391 / DSM 10237 / CIP 104748 / NCIMB 11846 / Nb-255)).